We begin with the raw amino-acid sequence, 86 residues long: Acyl carrier protein (86 aa).

The Carrier domain occupies 7–85 (SKVDNIEQKV…DVVNYIKEHK (79 aa)). The residue at position 45 (serine 45) is an O-(pantetheine 4'-phosphoryl)serine.

It belongs to the acyl carrier protein (ACP) family. Post-translationally, 4'-phosphopantetheine is transferred from CoA to a specific serine of apo-ACP by AcpS. This modification is essential for activity because fatty acids are bound in thioester linkage to the sulfhydryl of the prosthetic group.

Its subcellular location is the cytoplasm. Its pathway is lipid metabolism; fatty acid biosynthesis. Functionally, carrier of the growing fatty acid chain in fatty acid biosynthesis. This is Acyl carrier protein from Rickettsia bellii (strain RML369-C).